A 353-amino-acid chain; its full sequence is Photosystem II D2 protein (353 aa).

Position 2 is an N-acetylthreonine (T2). A Phosphothreonine modification is found at T2. Residues 41–61 (CAYFALGGWFTGTTFVTSWYT) form a helical membrane-spanning segment. H118 contributes to the chlorophyll a binding site. The chain crosses the membrane as a helical span at residues 125 to 141 (GFMLRQFELARSVQLRP). Residues Q130 and N143 each coordinate pheophytin a. The chain crosses the membrane as a helical span at residues 153–166 (VFVSVFLIYPLGQS). Position 198 (H198) interacts with chlorophyll a. The chain crosses the membrane as a helical span at residues 208 to 228 (AALLCAIHGATVENLYFEDGD). A plastoquinone-binding residues include H215 and F262. Residue H215 coordinates Fe cation. Residue H269 coordinates Fe cation. A helical membrane pass occupies residues 279–295 (GLWMSALGVVGLALNLR).

Belongs to the reaction center PufL/M/PsbA/D family. As to quaternary structure, PSII is composed of 1 copy each of membrane proteins PsbA, PsbB, PsbC, PsbD, PsbE, PsbF, PsbH, PsbI, PsbJ, PsbK, PsbL, PsbM, PsbT, PsbX, PsbY, PsbZ, Psb30/Ycf12, at least 3 peripheral proteins of the oxygen-evolving complex and a large number of cofactors. It forms dimeric complexes. It depends on The D1/D2 heterodimer binds P680, chlorophylls that are the primary electron donor of PSII, and subsequent electron acceptors. It shares a non-heme iron and each subunit binds pheophytin, quinone, additional chlorophylls, carotenoids and lipids. There is also a Cl(-1) ion associated with D1 and D2, which is required for oxygen evolution. The PSII complex binds additional chlorophylls, carotenoids and specific lipids. as a cofactor.

The protein localises to the plastid. It is found in the chloroplast thylakoid membrane. The enzyme catalyses 2 a plastoquinone + 4 hnu + 2 H2O = 2 a plastoquinol + O2. Functionally, photosystem II (PSII) is a light-driven water:plastoquinone oxidoreductase that uses light energy to abstract electrons from H(2)O, generating O(2) and a proton gradient subsequently used for ATP formation. It consists of a core antenna complex that captures photons, and an electron transfer chain that converts photonic excitation into a charge separation. The D1/D2 (PsbA/PsbD) reaction center heterodimer binds P680, the primary electron donor of PSII as well as several subsequent electron acceptors. D2 is needed for assembly of a stable PSII complex. The polypeptide is Photosystem II D2 protein (Panax ginseng (Korean ginseng)).